The following is a 334-amino-acid chain: Heat-inducible transcription repressor HrcA (334 aa).

Belongs to the HrcA family.

Negative regulator of class I heat shock genes (grpE-dnaK-dnaJ and groELS operons). Prevents heat-shock induction of these operons. The sequence is that of Heat-inducible transcription repressor HrcA from Acidovorax sp. (strain JS42).